The following is a 327-amino-acid chain: Lipoyl synthase (327 aa).

[4Fe-4S] cluster is bound by residues Cys75, Cys80, Cys86, Cys101, Cys105, Cys108, and Ser315. Positions 87–304 constitute a Radical SAM core domain; the sequence is FGNGTATFMI…EEEAYKMGFS (218 aa).

The protein belongs to the radical SAM superfamily. Lipoyl synthase family. Requires [4Fe-4S] cluster as cofactor.

It localises to the cytoplasm. It carries out the reaction [[Fe-S] cluster scaffold protein carrying a second [4Fe-4S](2+) cluster] + N(6)-octanoyl-L-lysyl-[protein] + 2 oxidized [2Fe-2S]-[ferredoxin] + 2 S-adenosyl-L-methionine + 4 H(+) = [[Fe-S] cluster scaffold protein] + N(6)-[(R)-dihydrolipoyl]-L-lysyl-[protein] + 4 Fe(3+) + 2 hydrogen sulfide + 2 5'-deoxyadenosine + 2 L-methionine + 2 reduced [2Fe-2S]-[ferredoxin]. It functions in the pathway protein modification; protein lipoylation via endogenous pathway; protein N(6)-(lipoyl)lysine from octanoyl-[acyl-carrier-protein]: step 2/2. Its function is as follows. Catalyzes the radical-mediated insertion of two sulfur atoms into the C-6 and C-8 positions of the octanoyl moiety bound to the lipoyl domains of lipoate-dependent enzymes, thereby converting the octanoylated domains into lipoylated derivatives. This chain is Lipoyl synthase, found in Variovorax paradoxus (strain S110).